Consider the following 86-residue polypeptide: MANIKSQVKRIRTNEAARLRNQSVKSSLRTAIRSFREAAAAGDKDKANELLVATSRKLDKAASKGVIHANQAANKKSALAQAINKI.

Belongs to the bacterial ribosomal protein bS20 family.

In terms of biological role, binds directly to 16S ribosomal RNA. The polypeptide is Small ribosomal subunit protein bS20 (Rhodococcus jostii (strain RHA1)).